The following is a 292-amino-acid chain: 4,5:9,10-diseco-3-hydroxy-5,9,17-trioxoandrosta-1(10),2-diene-4-oate hydrolase (292 aa).

Substrate is bound by residues 44–45 (GG), asparagine 53, asparagine 113, and arginine 192. The active-site Proton acceptor is histidine 269. Tryptophan 270 contacts substrate.

It belongs to the AB hydrolase superfamily. HsaD family. As to quaternary structure, homodimer.

It catalyses the reaction (1E,2Z)-3-hydroxy-5,9,17-trioxo-4,5:9,10-disecoandrosta-1(10),2-dien-4-oate + H2O = 3-[(3aS,4S,7aS)-7a-methyl-1,5-dioxo-octahydro-1H-inden-4-yl]propanoate + (2Z,4Z)-2-hydroxyhexa-2,4-dienoate + H(+). Its pathway is lipid metabolism; steroid biosynthesis. Catalyzes the hydrolysis of a carbon-carbon bond in 4,5: 9,10-diseco-3-hydroxy-5,9,17-trioxoandrosta-1(10),2-diene-4-oate (4,9-DSHA) to yield 9,17-dioxo-1,2,3,4,10,19-hexanorandrostan-5-oate (DOHNAA) and 2-hydroxy-hexa-2,4-dienoate (HHD). Also involved in biphenyl and polychlorinated biphenyls (PCBs) degradation. In Rhodococcus jostii (strain RHA1), this protein is 4,5:9,10-diseco-3-hydroxy-5,9,17-trioxoandrosta-1(10),2-diene-4-oate hydrolase (hsaD).